The chain runs to 427 residues: Histidine--tRNA ligase (427 aa).

This sequence belongs to the class-II aminoacyl-tRNA synthetase family. In terms of assembly, homodimer.

The protein resides in the cytoplasm. The catalysed reaction is tRNA(His) + L-histidine + ATP = L-histidyl-tRNA(His) + AMP + diphosphate + H(+). This Chloroherpeton thalassium (strain ATCC 35110 / GB-78) protein is Histidine--tRNA ligase.